Reading from the N-terminus, the 283-residue chain is Acetylglutamate kinase (283 aa).

Residues 63-64, Arg-85, and Asn-178 contribute to the substrate site; that span reads GG.

Belongs to the acetylglutamate kinase family. ArgB subfamily.

It localises to the plastid. The protein resides in the chloroplast. It catalyses the reaction N-acetyl-L-glutamate + ATP = N-acetyl-L-glutamyl 5-phosphate + ADP. It functions in the pathway amino-acid biosynthesis; L-arginine biosynthesis; N(2)-acetyl-L-ornithine from L-glutamate: step 2/4. Catalyzes the ATP-dependent phosphorylation of N-acetyl-L-glutamate. This chain is Acetylglutamate kinase, found in Porphyra purpurea (Red seaweed).